The sequence spans 136 residues: NADPH-dependent 7-cyano-7-deazaguanine reductase (136 aa).

The active-site Thioimide intermediate is the cysteine 53. Aspartate 60 acts as the Proton donor in catalysis. Substrate is bound by residues 75 to 77 and 94 to 95; these read VEL and HE.

The protein belongs to the GTP cyclohydrolase I family. QueF type 1 subfamily.

It is found in the cytoplasm. It catalyses the reaction 7-aminomethyl-7-carbaguanine + 2 NADP(+) = 7-cyano-7-deazaguanine + 2 NADPH + 3 H(+). It participates in tRNA modification; tRNA-queuosine biosynthesis. Its function is as follows. Catalyzes the NADPH-dependent reduction of 7-cyano-7-deazaguanine (preQ0) to 7-aminomethyl-7-deazaguanine (preQ1). The protein is NADPH-dependent 7-cyano-7-deazaguanine reductase of Nostoc sp. (strain PCC 7120 / SAG 25.82 / UTEX 2576).